Here is a 196-residue protein sequence, read N- to C-terminus: Large ribosomal subunit protein bL25 (196 aa).

Belongs to the bacterial ribosomal protein bL25 family. CTC subfamily. Part of the 50S ribosomal subunit; part of the 5S rRNA/L5/L18/L25 subcomplex. Contacts the 5S rRNA. Binds to the 5S rRNA independently of L5 and L18.

In terms of biological role, this is one of the proteins that binds to the 5S RNA in the ribosome where it forms part of the central protuberance. The chain is Large ribosomal subunit protein bL25 from Geotalea daltonii (strain DSM 22248 / JCM 15807 / FRC-32) (Geobacter daltonii).